The chain runs to 237 residues: UDP-2,3-diacylglucosamine hydrolase (237 aa).

D9, H11, D42, N80, and H115 together coordinate Mn(2+). Residue 80-81 (NR) participates in substrate binding. Substrate is bound by residues D123, S161, K165, K168, and H196. The Mn(2+) site is built by H196 and H198.

It belongs to the LpxH family. It depends on Mn(2+) as a cofactor.

Its subcellular location is the cell inner membrane. The enzyme catalyses UDP-2-N,3-O-bis[(3R)-3-hydroxytetradecanoyl]-alpha-D-glucosamine + H2O = 2-N,3-O-bis[(3R)-3-hydroxytetradecanoyl]-alpha-D-glucosaminyl 1-phosphate + UMP + 2 H(+). It functions in the pathway glycolipid biosynthesis; lipid IV(A) biosynthesis; lipid IV(A) from (3R)-3-hydroxytetradecanoyl-[acyl-carrier-protein] and UDP-N-acetyl-alpha-D-glucosamine: step 4/6. Its function is as follows. Hydrolyzes the pyrophosphate bond of UDP-2,3-diacylglucosamine to yield 2,3-diacylglucosamine 1-phosphate (lipid X) and UMP by catalyzing the attack of water at the alpha-P atom. Involved in the biosynthesis of lipid A, a phosphorylated glycolipid that anchors the lipopolysaccharide to the outer membrane of the cell. The protein is UDP-2,3-diacylglucosamine hydrolase of Haemophilus influenzae (strain PittGG).